Reading from the N-terminus, the 104-residue chain is Ribonuclease P protein component 4 (104 aa).

Cys57, Cys60, Cys83, and Cys86 together coordinate Zn(2+).

This sequence belongs to the eukaryotic/archaeal RNase P protein component 4 family. In terms of assembly, consists of a catalytic RNA component and at least 4-5 protein subunits. Zn(2+) serves as cofactor.

Its subcellular location is the cytoplasm. The catalysed reaction is Endonucleolytic cleavage of RNA, removing 5'-extranucleotides from tRNA precursor.. Its function is as follows. Part of ribonuclease P, a protein complex that generates mature tRNA molecules by cleaving their 5'-ends. The protein is Ribonuclease P protein component 4 of Saccharolobus islandicus (strain M.14.25 / Kamchatka #1) (Sulfolobus islandicus).